A 315-amino-acid chain; its full sequence is Phosphatidylglycerol--prolipoprotein diacylglyceryl transferase (315 aa).

The next 2 helical transmembrane spans lie at 19 to 39 and 93 to 113; these read FTIH…VWIL and VWEG…VAFL. Arg-141 is a binding site for a 1,2-diacyl-sn-glycero-3-phospho-(1'-sn-glycerol). A run of 2 helical transmembrane segments spans residues 188-208 and 256-276; these read LFHP…ALII and MWTA…LYQY.

This sequence belongs to the Lgt family.

Its subcellular location is the cell membrane. It carries out the reaction L-cysteinyl-[prolipoprotein] + a 1,2-diacyl-sn-glycero-3-phospho-(1'-sn-glycerol) = an S-1,2-diacyl-sn-glyceryl-L-cysteinyl-[prolipoprotein] + sn-glycerol 1-phosphate + H(+). It participates in protein modification; lipoprotein biosynthesis (diacylglyceryl transfer). In terms of biological role, catalyzes the transfer of the diacylglyceryl group from phosphatidylglycerol to the sulfhydryl group of the N-terminal cysteine of a prolipoprotein, the first step in the formation of mature lipoproteins. The polypeptide is Phosphatidylglycerol--prolipoprotein diacylglyceryl transferase (Bifidobacterium longum subsp. infantis (strain ATCC 15697 / DSM 20088 / JCM 1222 / NCTC 11817 / S12)).